The primary structure comprises 953 residues: Isoleucine--tRNA ligase (953 aa).

The 'HIGH' region motif lies at 57 to 67 (PYANGDIHIGH). Residue Glu-582 coordinates L-isoleucyl-5'-AMP. The 'KMSKS' region motif lies at 623-627 (KMSKS). Residue Lys-626 coordinates ATP. Residues Cys-916, Cys-919, Cys-936, and Cys-939 each coordinate Zn(2+).

It belongs to the class-I aminoacyl-tRNA synthetase family. IleS type 1 subfamily. Monomer. Zn(2+) is required as a cofactor.

The protein localises to the cytoplasm. It carries out the reaction tRNA(Ile) + L-isoleucine + ATP = L-isoleucyl-tRNA(Ile) + AMP + diphosphate. Its function is as follows. Catalyzes the attachment of isoleucine to tRNA(Ile). As IleRS can inadvertently accommodate and process structurally similar amino acids such as valine, to avoid such errors it has two additional distinct tRNA(Ile)-dependent editing activities. One activity is designated as 'pretransfer' editing and involves the hydrolysis of activated Val-AMP. The other activity is designated 'posttransfer' editing and involves deacylation of mischarged Val-tRNA(Ile). This Bordetella parapertussis (strain 12822 / ATCC BAA-587 / NCTC 13253) protein is Isoleucine--tRNA ligase.